The chain runs to 92 residues: Small ribosomal subunit protein uS19c (92 aa).

Belongs to the universal ribosomal protein uS19 family.

It is found in the plastid. The protein resides in the chloroplast. In terms of biological role, protein S19 forms a complex with S13 that binds strongly to the 16S ribosomal RNA. The protein is Small ribosomal subunit protein uS19c (rps19) of Porphyra purpurea (Red seaweed).